The sequence spans 216 residues: ADP-sugar pyrophosphatase (216 aa).

Met-1 is subject to N-acetylmethionine. 2 positions are modified to phosphoserine: Ser-3 and Ser-10. Trp-28 is a substrate binding site. Lys-42 participates in a covalent cross-link: Glycyl lysine isopeptide (Lys-Gly) (interchain with G-Cter in SUMO2). Thr-45 carries the phosphothreonine modification. Residues 46 to 47 (WE) and Arg-51 contribute to the substrate site. Positions 57–194 (QTADGVAVIP…EEHLTVDARV (138 aa)) constitute a Nudix hydrolase domain. The residue at position 74 (Tyr-74) is a Phosphotyrosine. Arg-84 is a binding site for substrate. A Mg(2+)-binding site is contributed by Ala-96. The Nudix box motif lies at 97–118 (GLIDDGETPEAAALRELEEETG). Leu-98 provides a ligand contact to substrate. The Mg(2+) site is built by Glu-112 and Glu-116. Substrate is bound at residue Asp-133. A Mg(2+)-binding site is contributed by Glu-163. 2 positions are modified to N6-acetyllysine: Lys-207 and Lys-215.

It belongs to the Nudix hydrolase family. In terms of assembly, homodimer. Interacts with PARG. The cofactor is Mg(2+). Phosphorylation at Thr-45 is required for homodimer stability; dephosphorylation results in destabilization of the homodimer. Dephosphorylation at Thr-45 promotes the ATP-synthesis activity.

It is found in the nucleus. The catalysed reaction is D-ribose 5-phosphate + ATP + H(+) = ADP-D-ribose + diphosphate. The enzyme catalyses ADP-D-ribose + H2O = D-ribose 5-phosphate + AMP + 2 H(+). It carries out the reaction 8-oxo-dGDP + H2O = 8-oxo-dGMP + phosphate + H(+). In terms of biological role, enzyme that can either act as an ADP-sugar pyrophosphatase in absence of diphosphate or catalyze the synthesis of ATP in presence of diphosphate. In absence of diphosphate, hydrolyzes with similar activities various modified nucleoside diphosphates such as ADP-ribose, ADP-mannose, ADP-glucose, 8-oxo-GDP and 8-oxo-dGDP. Can also hydrolyze other nucleotide sugars with low activity. In presence of diphosphate, mediates the synthesis of ATP in the nucleus by catalyzing the conversion of ADP-ribose to ATP and ribose 5-phosphate. Nuclear ATP synthesis takes place when dephosphorylated at Thr-45. Nuclear ATP generation is required for extensive chromatin remodeling events that are energy-consuming. Does not play a role in U8 snoRNA decapping activity. Binds U8 snoRNA. The chain is ADP-sugar pyrophosphatase from Pongo abelii (Sumatran orangutan).